The primary structure comprises 243 residues: MSKQKKSEIINRFRKRFDTKMTELGFTYQNIDLYQQAFSHSSFINDFNMNRLDHNERLEFLGDAVLELTVSRYLFDKHPNLPEGNLTKMRATIVCEPSLVIFANKIGLNEMILLGKGEEKTGGRTRPSLISDVFEAFIGALYLDQGLDIVWKFAEKVIFPHVEQNELLGVVDFKTQFQEYVHQQNKGDVTYNLIKEEGPAHHRLFTSEVILQGEAIAEGKGKTKKESEQRAAESAYKQLKQIK.

Positions 10-146 constitute an RNase III domain; it reads INRFRKRFDT…FIGALYLDQG (137 aa). Mg(2+) is bound at residue E59. D63 is a catalytic residue. Positions 132 and 135 each coordinate Mg(2+). The active site involves E135. Residues 172 to 241 enclose the DRBM domain; that stretch reads DFKTQFQEYV…AESAYKQLKQ (70 aa). Residues 219-231 show a composition bias toward basic and acidic residues; the sequence is GKGKTKKESEQRA. The disordered stretch occupies residues 219 to 243; that stretch reads GKGKTKKESEQRAAESAYKQLKQIK.

This sequence belongs to the ribonuclease III family. In terms of assembly, homodimer. The cofactor is Mg(2+).

The protein localises to the cytoplasm. The enzyme catalyses Endonucleolytic cleavage to 5'-phosphomonoester.. Its function is as follows. Digests double-stranded RNA. Involved in the processing of primary rRNA transcript to yield the immediate precursors to the large and small rRNAs (23S and 16S). Processes some mRNAs, and tRNAs when they are encoded in the rRNA operon. Processes pre-crRNA and tracrRNA of type II CRISPR loci if present in the organism. The protein is Ribonuclease 3 of Staphylococcus aureus (strain bovine RF122 / ET3-1).